The sequence spans 519 residues: Cytosol aminopeptidase (519 aa).

Residue S42 is modified to Phosphoserine. K45 carries the N6-succinyllysine modification. At S54 the chain carries Phosphoserine. An N6-succinyllysine mark is found at K61 and K103. Phosphoserine is present on residues S180 and S194. Positions 202 and 203 each coordinate Zn(2+). At K221 the chain carries N6-acetyllysine; alternate. K221 bears the N6-succinyllysine; alternate mark. Phosphoserine is present on S238. The Zn(2+) site is built by K282 and D287. Substrate contacts are provided by K282, D287, S292, and K294. D287 serves as a coordination point for Mg(2+). The active site involves K294. Zn(2+)-binding residues include R303, D305, D364, and E366. Residues D305 and D364 each contribute to the substrate site. Residues D364 and E366 each contribute to the Mg(2+) site. R368 is an active-site residue. K455 bears the N6-acetyllysine; alternate mark. K455 is modified (N6-succinyllysine; alternate). At K476 the chain carries N6-succinyllysine. Residue K489 is modified to N6-acetyllysine; alternate. At K489 the chain carries N6-succinyllysine; alternate.

Belongs to the peptidase M17 family. As to quaternary structure, homohexamer. Zn(2+) is required as a cofactor. Requires Mn(2+) as cofactor.

The protein localises to the cytoplasm. It catalyses the reaction Release of an N-terminal amino acid, Xaa-|-Yaa-, in which Xaa is preferably Leu, but may be other amino acids including Pro although not Arg or Lys, and Yaa may be Pro. Amino acid amides and methyl esters are also readily hydrolyzed, but rates on arylamides are exceedingly low.. It carries out the reaction an S-substituted L-cysteinylglycine + H2O = an S-substituted L-cysteine + glycine. The catalysed reaction is L-cysteinylglycine + H2O = L-cysteine + glycine. The enzyme catalyses S-benzyl-L-cysteinylglycine + H2O = S-benzyl-L-cysteine + glycine. It catalyses the reaction Release of N-terminal proline from a peptide.. Bimane-S-cysteinylglycine-hydrolyzing activity is inhibited by o-phenanthroline or bestatin, and is activated by the addition of zinc chloride. Functionally, cytosolic metallopeptidase that catalyzes the removal of unsubstituted N-terminal hydrophobic amino acids from various peptides. The presence of Zn(2+) ions is essential for the peptidase activity, and the association with other cofactors can modulate the substrate spectificity of the enzyme. For instance, in the presence of Mn(2+), it displays a specific Cys-Gly hydrolyzing activity of Cys-Gly-S-conjugates. Involved in the metabolism of glutathione and in the degradation of glutathione S-conjugates, which may play a role in the control of the cell redox status. The protein is Cytosol aminopeptidase of Rattus norvegicus (Rat).